A 496-amino-acid polypeptide reads, in one-letter code: Probable cytosol aminopeptidase (496 aa).

Residues Lys-258 and Asp-263 each contribute to the Mn(2+) site. The active site involves Lys-270. Positions 281, 340, and 342 each coordinate Mn(2+). Residue Arg-344 is part of the active site.

The protein belongs to the peptidase M17 family. Requires Mn(2+) as cofactor.

It localises to the cytoplasm. It carries out the reaction Release of an N-terminal amino acid, Xaa-|-Yaa-, in which Xaa is preferably Leu, but may be other amino acids including Pro although not Arg or Lys, and Yaa may be Pro. Amino acid amides and methyl esters are also readily hydrolyzed, but rates on arylamides are exceedingly low.. The catalysed reaction is Release of an N-terminal amino acid, preferentially leucine, but not glutamic or aspartic acids.. Its function is as follows. Presumably involved in the processing and regular turnover of intracellular proteins. Catalyzes the removal of unsubstituted N-terminal amino acids from various peptides. This Helicobacter pylori (strain Shi470) protein is Probable cytosol aminopeptidase.